We begin with the raw amino-acid sequence, 609 residues long: Albumin (609 aa).

Positions Met1 to Ser18 are cleaved as a signal peptide. Residues Arg19–Arg24 constitute a propeptide that is removed on maturation. 3 Albumin domains span residues Arg19–Arg210, Asp211–Pro403, and Leu404–Ala601. Position 27 (His27) interacts with Cu cation. A Phosphoserine; by FAM20C modification is found at Ser29. Glu30 contacts Ca(2+). Residue Lys36 is glycosylated (N-linked (Glc) (glycation) lysine). Asp37 contacts Ca(2+). An N-linked (Glc) (glycation) lysine; in vitro glycan is attached at Lys75. Cysteines 77 and 86 form a disulfide. Residues Ser82 and Ser89 each carry the phosphoserine; by FAM20C modification. His91 is a binding site for Zn(2+). Disulfide bonds link Cys99–Cys115, Cys114–Cys125, Cys148–Cys193, and Cys192–Cys201. At Thr107 the chain carries Phosphothreonine; by FAM20C. Lys161 and Lys186 each carry an N-linked (Glc) (glycation) lysine; in vitro glycan. The N-linked (Glc) (glycation) lysine; in vitro glycan is linked to Lys223. 2 disulfides stabilise this stretch: Cys224–Cys270 and Cys269–Cys277. The residue at position 229 (Lys229) is an N6-succinyllysine. Lys249 is a glycosylation site (N-linked (Glc) (glycation) lysine; in vitro). Lys257 is a glycosylation site (N-linked (Glc) (glycation) lysine). Lys264 contributes to the (4Z,15Z)-bilirubin IXalpha binding site. Glu268 is a binding site for Ca(2+). Zn(2+) contacts are provided by His271 and Asp273. The Ca(2+) site is built by Asp273, Glu276, Asp279, and Asp283. 2 disulfide bridges follow: Cys289/Cys303 and Cys302/Cys313. Ser297 carries the phosphoserine modification. Lys300 carries N-linked (Glc) (glycation) lysine; in vitro glycosylation. Lys305 carries N-linked (Glc) (glycation) lysine glycosylation. An N-linked (Glc) (glycation) lysine; in vitro glycan is attached at Lys337. 2 cysteine pairs are disulfide-bonded: Cys340-Cys385 and Cys384-Cys393. Residue Lys341 is glycosylated (N-linked (Glc) (glycation) lysine). An N-linked (GlcNAc...) asparagine; in variant Redhill glycan is attached at Asn342. Lys347 carries an N-linked (Glc) (glycation) lysine; in vitro glycan. The N-linked (Glc) (glycation) lysine glycan is linked to Lys375. Residues Lys402 and Lys437 are each glycosylated (N-linked (Glc) (glycation) lysine; in vitro). 4 disulfides stabilise this stretch: Cys416–Cys462, Cys461–Cys472, Cys485–Cys501, and Cys500–Cys511. Phosphoserine is present on Ser443. Phosphothreonine occurs at positions 444 and 446. Residue Lys460 is modified to N6-succinyllysine. An N-linked (Glc) (glycation) lysine glycan is attached at Lys463. Lys468 carries an N-linked (Glc) (glycation) lysine; in vitro glycan. Ser513 bears the Phosphoserine mark. Asp518 carries N-linked (GlcNAc...) asparagine; in variant Casebrook glycosylation. Cystine bridges form between Cys538–Cys583 and Cys582–Cys591. Lys543 is subject to N6-succinyllysine. N-linked (Glc) (glycation) lysine glycosylation is present at Lys549. Lys558 carries the post-translational modification N6-methyllysine; alternate. N-linked (Glc) (glycation) lysine; alternate glycosylation occurs at Lys558. Lys560 and Lys569 each carry an N-linked (Glc) (glycation) lysine; in vitro glycan. N6-succinyllysine is present on Lys588. N-linked (Glc) (glycation) lysine; in vitro glycosylation occurs at Lys597.

This sequence belongs to the ALB/AFP/VDB family. In terms of assembly, interacts with FCGRT; this interaction regulates ALB homeostasis. Interacts with TASOR. In plasma, occurs in a covalently-linked complex with chromophore-bound alpha-1-microglobulin with molar ratio 1:2 and 1:1; this interaction does not prevent fatty acid binding to ALB. In terms of processing, kenitra variant is partially O-glycosylated at Thr-620. It has two new disulfide bonds Cys-600 to Cys-602 and Cys-601 to Cys-606. Glycated in diabetic patients. Post-translationally, phosphorylated by FAM20C in the extracellular medium. In terms of processing, acetylated on Lys-223 by acetylsalicylic acid. As to expression, plasma.

It is found in the secreted. Its function is as follows. Binds water, Ca(2+), Na(+), K(+), fatty acids, hormones, bilirubin and drugs. Its main function is the regulation of the colloidal osmotic pressure of blood. Major zinc transporter in plasma, typically binds about 80% of all plasma zinc. Major calcium and magnesium transporter in plasma, binds approximately 45% of circulating calcium and magnesium in plasma. Potentially has more than two calcium-binding sites and might additionally bind calcium in a non-specific manner. The shared binding site between zinc and calcium at residue Asp-273 suggests a crosstalk between zinc and calcium transport in the blood. The rank order of affinity is zinc &gt; calcium &gt; magnesium. Binds to the bacterial siderophore enterobactin and inhibits enterobactin-mediated iron uptake of E.coli from ferric transferrin, and may thereby limit the utilization of iron and growth of enteric bacteria such as E.coli. Does not prevent iron uptake by the bacterial siderophore aerobactin. The sequence is that of Albumin (ALB) from Homo sapiens (Human).